Consider the following 1099-residue polypeptide: Protein transport protein Sec24A (1099 aa).

Disordered regions lie at residues 1 to 36 (MSQP…GPVQ), 65 to 139 (KTLN…LPGA), and 279 to 317 (SQPT…AGLP). 5 stretches are compositionally biased toward polar residues: residues 10–20 (GGSSTGLQAQN), 68–90 (NPVS…NYQG), 108–126 (SLHS…QNPA), 279–292 (SQPT…SRSV), and 303–317 (YQNT…AGLP). The Zn(2+) site is built by Cys-437, Cys-440, Cys-458, and Cys-461. The tract at residues 437–461 (CRSCRTYINPFVSFLDQRRWKCNLC) is zinc finger-like. A Gelsolin-like repeat occupies 972 to 1044 (PQPPILQLSV…TPESARTIAF (73 aa)).

It belongs to the SEC23/SEC24 family. SEC24 subfamily. COPII is composed of at least five proteins: the Sec23/24 complex, the Sec13/31 complex and Sar1. Interacts with TMED2. Interacts (as part of the Sec23/24 complex) with SEC22B; recruits SEC22B into COPII-coated vesicles for its transport from the endoplasmic reticulum to the Golgi. Interacts with STING1; promoting STING1 translocation to COPII vesicles in a STEEP1-dependent manner. Interacts with TMEM39A. Interacts with SACM1L; this interaction is reduced in the absence of TMEM39A. Interacts with kinase FAM20C; transport of FAM20C from the endoplasmic reticulum to the Golgi is likely to be mediated by COPII vesicles.

It localises to the cytoplasmic vesicle. It is found in the COPII-coated vesicle membrane. The protein resides in the endoplasmic reticulum membrane. Its subcellular location is the cytoplasm. The protein localises to the cytosol. Its function is as follows. Component of the coat protein complex II (COPII) which promotes the formation of transport vesicles from the endoplasmic reticulum (ER). The coat has two main functions, the physical deformation of the endoplasmic reticulum membrane into vesicles and the selection of cargo molecules for their transport to the Golgi complex. Plays a central role in cargo selection within the COPII complex and together with SEC24B may have a different specificity compared to SEC24C and SEC24D. May package preferentially cargos with cytoplasmic DxE or LxxLE motifs and may also recognize conformational epitopes. The chain is Protein transport protein Sec24A from Bos taurus (Bovine).